The sequence spans 156 residues: Ribosomal RNA large subunit methyltransferase H (156 aa).

Residues Leu73, Gly104, and Val123–Leu128 contribute to the S-adenosyl-L-methionine site.

This sequence belongs to the RNA methyltransferase RlmH family. As to quaternary structure, homodimer.

The protein resides in the cytoplasm. It carries out the reaction pseudouridine(1915) in 23S rRNA + S-adenosyl-L-methionine = N(3)-methylpseudouridine(1915) in 23S rRNA + S-adenosyl-L-homocysteine + H(+). Its function is as follows. Specifically methylates the pseudouridine at position 1915 (m3Psi1915) in 23S rRNA. The chain is Ribosomal RNA large subunit methyltransferase H from Burkholderia thailandensis (strain ATCC 700388 / DSM 13276 / CCUG 48851 / CIP 106301 / E264).